Reading from the N-terminus, the 422-residue chain is G-protein coupled receptor 83 (422 aa).

Residues 1–16 (MGRRGALLCLLPLLRA) form the signal peptide. Residues 17-70 (AERPEGRADEPGLEAALAGPNASHFFWSNYSFSDWQNFVGRRRYGAESQNPTVK) are Extracellular-facing. Residues N37 and N45 are each glycosylated (N-linked (GlcNAc...) asparagine). A helical membrane pass occupies residues 71–91 (ALLVVAYSFIIVFSLFGNVLV). At 92–106 (CHVIFKNQRMRSATS) the chain is on the cytoplasmic side. Residues 107-128 (LFIVNLAVADILITLLNTPFTL) traverse the membrane as a helical segment. Residues 129–144 (VRFVNSTWVFGKGMCH) are Extracellular-facing. N133 carries N-linked (GlcNAc...) asparagine glycosylation. The helical transmembrane segment at 145–166 (VSRFAQYCSLHVSALTLTAIAV) threads the bilayer. Over 167-185 (DRHQVIMHPLKPRISITKG) the chain is Cytoplasmic. A helical membrane pass occupies residues 186–207 (VIYITVIWTMATFFSLPHAICQ). The Extracellular segment spans residues 208-237 (KLFTFKYSEDIVRSLCLPDFPEPADLFWKY). A helical membrane pass occupies residues 238-259 (LDLATFILLYILPLLIISVAYA). Residues 260–292 (RVAKKLWLCNTIGDVTTEQYLALRRKKKKTIKM) lie on the Cytoplasmic side of the membrane. The helical transmembrane segment at 293 to 314 (LMLVVVLFALCWFPLNCYVLLL) threads the bilayer. Over 315–326 (SSKVIHTNNALY) the chain is Extracellular. The helical transmembrane segment at 327–347 (FAFHWFAMSSTCYNPFIYCWL) threads the bilayer. Topologically, residues 348–422 (NENFRIELKA…SSVEPIVAMS (75 aa)) are cytoplasmic.

Belongs to the G-protein coupled receptor 1 family.

The protein localises to the cell membrane. Functionally, G-protein coupled receptor for PEN, a neuropeptide produced from the precursor protein, proSAAS (encoded by PCSK1N). Acts through a G(i)- and G(q)-alpha-alpha-mediated pathway in response to PEN. Plays a role in food intake and body weight regulation. May contribute to the regulation of anxiety-related behaviors. The polypeptide is G-protein coupled receptor 83 (GPR83) (Canis lupus familiaris (Dog)).